The sequence spans 148 residues: Nucleoside diphosphate kinase A (148 aa).

Residues Lys-9, Phe-57, Arg-85, Thr-91, Arg-102, and Asn-112 each coordinate ATP. His-115 functions as the Pros-phosphohistidine intermediate in the catalytic mechanism.

Belongs to the NDK family. Mg(2+) is required as a cofactor.

The catalysed reaction is a 2'-deoxyribonucleoside 5'-diphosphate + ATP = a 2'-deoxyribonucleoside 5'-triphosphate + ADP. It carries out the reaction a ribonucleoside 5'-diphosphate + ATP = a ribonucleoside 5'-triphosphate + ADP. Its function is as follows. Major role in the synthesis of nucleoside triphosphates other than ATP. The ATP gamma phosphate is transferred to the NDP beta phosphate via a ping-pong mechanism, using a phosphorylated active-site intermediate. In Flaveria bidentis (Coastal plain yellowtops), this protein is Nucleoside diphosphate kinase A.